The primary structure comprises 144 residues: Protection of telomeres protein 1c (144 aa).

The protein belongs to the telombin family. In terms of tissue distribution, expressed at extremely low levels at the limit of detection.

It is found in the nucleus. The protein localises to the chromosome. Its subcellular location is the telomere. Functionally, binds specifically single-stranded telomeric DNA with weak affinity. Has probably no function in the regulation of telomere length. In Arabidopsis thaliana (Mouse-ear cress), this protein is Protection of telomeres protein 1c.